The primary structure comprises 375 residues: Odorant receptor 10 (375 aa).

The next 6 helical transmembrane spans lie at 32–52 (ISII…GHSW), 58–78 (VIIK…TLIL), 125–145 (NLAL…FTGV), 167–187 (IIYL…IPFT), 250–270 (YICF…LFLL), and 279–299 (IVIV…FYWH).

It belongs to the insect chemoreceptor superfamily. Heteromeric odorant receptor channel (TC 1.A.69) family. As to expression, expressed in female antenna, maxillary palp and proboscis. Expressed in female body. Expressed in male tissues.

It is found in the cell membrane. Its function is as follows. Odorant receptor which complexes with Orco, a coreceptor, to form odorant-sensing units, providing sensitive and prolonged odorant signaling and calcium permeability. Can sense indole, 1-octen-3-ol, 3-methyindole and an insect repellent DEET. In Aedes albopictus (Asian tiger mosquito), this protein is Odorant receptor 10.